The primary structure comprises 113 residues: Large ribosomal subunit protein uL22 (113 aa).

The protein belongs to the universal ribosomal protein uL22 family. Part of the 50S ribosomal subunit.

Its function is as follows. This protein binds specifically to 23S rRNA; its binding is stimulated by other ribosomal proteins, e.g. L4, L17, and L20. It is important during the early stages of 50S assembly. It makes multiple contacts with different domains of the 23S rRNA in the assembled 50S subunit and ribosome. The globular domain of the protein is located near the polypeptide exit tunnel on the outside of the subunit, while an extended beta-hairpin is found that lines the wall of the exit tunnel in the center of the 70S ribosome. This is Large ribosomal subunit protein uL22 from Oceanobacillus iheyensis (strain DSM 14371 / CIP 107618 / JCM 11309 / KCTC 3954 / HTE831).